Here is a 600-residue protein sequence, read N- to C-terminus: Elongation factor 4 (600 aa).

Residues 4-186 (SKIRNFSIIA…AIVNKIPAPY (183 aa)) form the tr-type G domain. Residues 16–21 (DHGKST) and 133–136 (NKVD) contribute to the GTP site.

Belongs to the TRAFAC class translation factor GTPase superfamily. Classic translation factor GTPase family. LepA subfamily.

It localises to the cell membrane. The catalysed reaction is GTP + H2O = GDP + phosphate + H(+). Required for accurate and efficient protein synthesis under certain stress conditions. May act as a fidelity factor of the translation reaction, by catalyzing a one-codon backward translocation of tRNAs on improperly translocated ribosomes. Back-translocation proceeds from a post-translocation (POST) complex to a pre-translocation (PRE) complex, thus giving elongation factor G a second chance to translocate the tRNAs correctly. Binds to ribosomes in a GTP-dependent manner. The polypeptide is Elongation factor 4 (Mesoplasma florum (strain ATCC 33453 / NBRC 100688 / NCTC 11704 / L1) (Acholeplasma florum)).